Consider the following 120-residue polypeptide: Large ribosomal subunit protein eL18 (120 aa).

Belongs to the eukaryotic ribosomal protein eL18 family.

The polypeptide is Large ribosomal subunit protein eL18 (Pyrococcus horikoshii (strain ATCC 700860 / DSM 12428 / JCM 9974 / NBRC 100139 / OT-3)).